We begin with the raw amino-acid sequence, 427 residues long: Enolase (427 aa).

Position 163 (Gln-163) interacts with (2R)-2-phosphoglycerate. Glu-205 acts as the Proton donor in catalysis. Mg(2+)-binding residues include Asp-242, Glu-285, and Asp-312. (2R)-2-phosphoglycerate-binding residues include Lys-337, Arg-366, Ser-367, and Lys-388. Lys-337 acts as the Proton acceptor in catalysis.

Belongs to the enolase family. Mg(2+) is required as a cofactor.

The protein resides in the cytoplasm. It localises to the secreted. Its subcellular location is the cell surface. It carries out the reaction (2R)-2-phosphoglycerate = phosphoenolpyruvate + H2O. It participates in carbohydrate degradation; glycolysis; pyruvate from D-glyceraldehyde 3-phosphate: step 4/5. In terms of biological role, catalyzes the reversible conversion of 2-phosphoglycerate (2-PG) into phosphoenolpyruvate (PEP). It is essential for the degradation of carbohydrates via glycolysis. This chain is Enolase, found in Laribacter hongkongensis (strain HLHK9).